Here is a 56-residue protein sequence, read N- to C-terminus: Small ribosomal subunit protein uS14 (56 aa).

Residues Cys-21, Cys-24, Cys-39, and Cys-42 each contribute to the Zn(2+) site.

This sequence belongs to the universal ribosomal protein uS14 family. It depends on Zn(2+) as a cofactor.

The protein is Small ribosomal subunit protein uS14 (RPS29) of Candida glabrata (strain ATCC 2001 / BCRC 20586 / JCM 3761 / NBRC 0622 / NRRL Y-65 / CBS 138) (Yeast).